We begin with the raw amino-acid sequence, 398 residues long: MTEQVIGANSVPGIIAPDNVHVIQPSNPVASGNHLQPSEVTTYPISPKVIHCDTGRANLQNLLVVNQNSAAGVQSQPIGYQRQYPVGTASLQTVPGVIQYTQGTTNLQTWPGDLQNPLNANPGLTHTSNSSQWNTSFASFTSFNPKKFINEEVRTLGAIQILIGLTHIFSAINPVLYYYPFVTWLSGYPLWGGLSYIVSGSLSVWAAKDPSPCVVNSSISFNIISALFAFAGIFIIITDLSLYYVTTYSKAVSGGLLPFALLEFILTCVVSHFGCQATCCRQFENVAVIPTVFSFNPANTTTSPVNATTGPVNAATGPVSATNGPVNTTIHPVNTTTSPVNTTTSPVNVTTGPVNANIGPVNVTTGPVNTTTAPAKATTSCVNAIHTSNVPPNPRTKK.

4 helical membrane-spanning segments follow: residues 156-176 (LGAI…NPVL), 178-198 (YYPF…SYIV), 218-238 (SISF…IIIT), and 251-271 (AVSG…CVVS). Residues 316 to 346 (TGPVSATNGPVNTTIHPVNTTTSPVNTTTSP) form a disordered region. Positions 319–331 (VSATNGPVNTTIH) are enriched in polar residues. Over residues 332-346 (PVNTTTSPVNTTTSP) the composition is skewed to low complexity.

This sequence belongs to the MS4A family.

It is found in the membrane. This Homo sapiens (Human) protein is Membrane-spanning 4-domains subfamily A member 18 (MS4A18).